Here is a 252-residue protein sequence, read N- to C-terminus: Vacuolar-sorting protein dot2 (252 aa).

It belongs to the SNF8 family. Component of the endosomal sorting complex required for transport II (ESCRT-II).

It localises to the cytoplasm. It is found in the nucleus. The protein resides in the endosome membrane. Functionally, component of the endosomal sorting complex required for transport II (ESCRT-II), which is required for multivesicular body (MVB) formation and sorting of endosomal cargo proteins into MVBs. The MVB pathway mediates delivery of transmembrane proteins into the lumen of the lysosome for degradation. The ESCRT-II complex is probably involved in the recruitment of the ESCRT-III complex. Negatively regulates meiotic spindle pole body maturation via indirect regulation of the pcp1 gene. Required for efficient entry into pre-meiotic S phase. The polypeptide is Vacuolar-sorting protein dot2 (dot2) (Schizosaccharomyces pombe (strain 972 / ATCC 24843) (Fission yeast)).